Consider the following 370-residue polypeptide: uncharacterized protein (370 aa).

This is an uncharacterized protein from Acanthamoeba polyphaga (Amoeba).